Here is a 247-residue protein sequence, read N- to C-terminus: 23S rRNA (guanosine-2'-O-)-methyltransferase RlmB (247 aa).

S-adenosyl-L-methionine is bound by residues G197, I217, and L226.

It belongs to the class IV-like SAM-binding methyltransferase superfamily. RNA methyltransferase TrmH family. RlmB subfamily.

The protein localises to the cytoplasm. It carries out the reaction guanosine(2251) in 23S rRNA + S-adenosyl-L-methionine = 2'-O-methylguanosine(2251) in 23S rRNA + S-adenosyl-L-homocysteine + H(+). Functionally, specifically methylates the ribose of guanosine 2251 in 23S rRNA. This Burkholderia sp protein is 23S rRNA (guanosine-2'-O-)-methyltransferase RlmB.